We begin with the raw amino-acid sequence, 482 residues long: D-inositol 3-phosphate glycosyltransferase (482 aa).

A 1D-myo-inositol 3-phosphate-binding site is contributed by histidine 63. UDP-N-acetyl-alpha-D-glucosamine-binding positions include glutamine 69 to proline 70 and glycine 77. 1D-myo-inositol 3-phosphate-binding positions include aspartate 74–asparagine 79, lysine 132, tyrosine 165, threonine 189, and arginine 209. UDP-N-acetyl-alpha-D-glucosamine-binding residues include arginine 289, lysine 294, and glutamine 355. Tyrosine 364, arginine 365, and alanine 367 together coordinate Mg(2+). Residues glutamate 377 and glutamate 385 each coordinate UDP-N-acetyl-alpha-D-glucosamine. Threonine 391 provides a ligand contact to Mg(2+).

The protein belongs to the glycosyltransferase group 1 family. MshA subfamily. As to quaternary structure, homodimer.

It catalyses the reaction 1D-myo-inositol 3-phosphate + UDP-N-acetyl-alpha-D-glucosamine = 1D-myo-inositol 2-acetamido-2-deoxy-alpha-D-glucopyranoside 3-phosphate + UDP + H(+). In terms of biological role, catalyzes the transfer of a N-acetyl-glucosamine moiety to 1D-myo-inositol 3-phosphate to produce 1D-myo-inositol 2-acetamido-2-deoxy-glucopyranoside 3-phosphate in the mycothiol biosynthesis pathway. The protein is D-inositol 3-phosphate glycosyltransferase of Salinispora tropica (strain ATCC BAA-916 / DSM 44818 / JCM 13857 / NBRC 105044 / CNB-440).